The following is a 332-amino-acid chain: DNA-directed RNA polymerase subunit alpha (332 aa).

The alpha N-terminal domain (alpha-NTD) stretch occupies residues 1–244 (MKKHAKVYYS…AHLNLLADVE (244 aa)). The interval 259-332 (IKEEPIRRFS…NYKNENKGEN (74 aa)) is alpha C-terminal domain (alpha-CTD).

It belongs to the RNA polymerase alpha chain family. As to quaternary structure, homodimer. The RNAP catalytic core consists of 2 alpha, 1 beta, 1 beta' and 1 omega subunit. When a sigma factor is associated with the core the holoenzyme is formed, which can initiate transcription.

It carries out the reaction RNA(n) + a ribonucleoside 5'-triphosphate = RNA(n+1) + diphosphate. In terms of biological role, DNA-dependent RNA polymerase catalyzes the transcription of DNA into RNA using the four ribonucleoside triphosphates as substrates. The protein is DNA-directed RNA polymerase subunit alpha of Mesomycoplasma hyopneumoniae (strain 7448) (Mycoplasma hyopneumoniae).